A 348-amino-acid chain; its full sequence is Lipoyl synthase (348 aa).

The disordered stretch occupies residues 1-45; sequence MSESAKPRITSGSKFRNEHGFSAIKDGVKRSSSNTEGKSLERKPK. Positions 73, 78, 84, 99, 103, 106, and 314 each coordinate [4Fe-4S] cluster. Residues 85–303 enclose the Radical SAM core domain; it reads WTNGTATIMV…RDIGLEKGFM (219 aa).

Belongs to the radical SAM superfamily. Lipoyl synthase family. It depends on [4Fe-4S] cluster as a cofactor.

It localises to the cytoplasm. The enzyme catalyses [[Fe-S] cluster scaffold protein carrying a second [4Fe-4S](2+) cluster] + N(6)-octanoyl-L-lysyl-[protein] + 2 oxidized [2Fe-2S]-[ferredoxin] + 2 S-adenosyl-L-methionine + 4 H(+) = [[Fe-S] cluster scaffold protein] + N(6)-[(R)-dihydrolipoyl]-L-lysyl-[protein] + 4 Fe(3+) + 2 hydrogen sulfide + 2 5'-deoxyadenosine + 2 L-methionine + 2 reduced [2Fe-2S]-[ferredoxin]. It functions in the pathway protein modification; protein lipoylation via endogenous pathway; protein N(6)-(lipoyl)lysine from octanoyl-[acyl-carrier-protein]: step 2/2. Its function is as follows. Catalyzes the radical-mediated insertion of two sulfur atoms into the C-6 and C-8 positions of the octanoyl moiety bound to the lipoyl domains of lipoate-dependent enzymes, thereby converting the octanoylated domains into lipoylated derivatives. The sequence is that of Lipoyl synthase from Marinobacter nauticus (strain ATCC 700491 / DSM 11845 / VT8) (Marinobacter aquaeolei).